Reading from the N-terminus, the 557-residue chain is Iron-sulfur cluster assembly SufBD family protein ABCI8, chloroplastic (557 aa).

The tract at residues Met-1–Pro-47 is disordered. The transit peptide at Met-1–Arg-52 directs the protein to the chloroplast. Positions Ser-10 to Pro-24 are enriched in low complexity.

This sequence belongs to the iron-sulfur cluster assembly SufBD family.

It localises to the plastid. It is found in the chloroplast. In terms of biological role, involved in light signaling, probably by mediating the transport and correct distribution of protoporphyrin IX, a chlorophyll precursor, in response to far-red light. This chain is Iron-sulfur cluster assembly SufBD family protein ABCI8, chloroplastic (ABCI8), found in Arabidopsis thaliana (Mouse-ear cress).